The primary structure comprises 309 residues: tRNA dimethylallyltransferase (309 aa).

10-17 (GPTAVGKT) serves as a coordination point for ATP. 12–17 (TAVGKT) is a binding site for substrate. Positions 35-38 (DSMQ) are interaction with substrate tRNA.

Belongs to the IPP transferase family. Monomer. Mg(2+) is required as a cofactor.

It carries out the reaction adenosine(37) in tRNA + dimethylallyl diphosphate = N(6)-dimethylallyladenosine(37) in tRNA + diphosphate. In terms of biological role, catalyzes the transfer of a dimethylallyl group onto the adenine at position 37 in tRNAs that read codons beginning with uridine, leading to the formation of N6-(dimethylallyl)adenosine (i(6)A). This chain is tRNA dimethylallyltransferase, found in Clostridium beijerinckii (strain ATCC 51743 / NCIMB 8052) (Clostridium acetobutylicum).